A 201-amino-acid polypeptide reads, in one-letter code: UPF0301 protein Avi_1069 (201 aa).

This sequence belongs to the UPF0301 (AlgH) family.

The protein is UPF0301 protein Avi_1069 of Allorhizobium ampelinum (strain ATCC BAA-846 / DSM 112012 / S4) (Agrobacterium vitis (strain S4)).